The primary structure comprises 540 residues: CTP synthase (540 aa).

Residues 1–266 are amidoligase domain; the sequence is MAVKYIFVTG…LTPIARHLEL (266 aa). Residue Ser14 coordinates CTP. A UTP-binding site is contributed by Ser14. Residues 15-20 and Asp72 contribute to the ATP site; that span reads SLGKGI. Asp72 and Glu140 together coordinate Mg(2+). CTP is bound by residues 147–149, 187–192, and Lys223; these read DIE and KTKPTQ. UTP contacts are provided by residues 187-192 and Lys223; that span reads KTKPTQ. The Glutamine amidotransferase type-1 domain maps to 291 to 540; sequence TIGFVGKYLS…VKETLAHKKT (250 aa). Gly351 is a binding site for L-glutamine. Residue Cys378 is the Nucleophile; for glutamine hydrolysis of the active site. Residues 379–382, Glu402, and Arg470 each bind L-glutamine; that span reads LGMQ. Residues His513 and Glu515 contribute to the active site.

The protein belongs to the CTP synthase family. Homotetramer.

It catalyses the reaction UTP + L-glutamine + ATP + H2O = CTP + L-glutamate + ADP + phosphate + 2 H(+). It carries out the reaction L-glutamine + H2O = L-glutamate + NH4(+). The catalysed reaction is UTP + NH4(+) + ATP = CTP + ADP + phosphate + 2 H(+). The protein operates within pyrimidine metabolism; CTP biosynthesis via de novo pathway; CTP from UDP: step 2/2. Its activity is regulated as follows. Allosterically activated by GTP, when glutamine is the substrate; GTP has no effect on the reaction when ammonia is the substrate. The allosteric effector GTP functions by stabilizing the protein conformation that binds the tetrahedral intermediate(s) formed during glutamine hydrolysis. Inhibited by the product CTP, via allosteric rather than competitive inhibition. Its function is as follows. Catalyzes the ATP-dependent amination of UTP to CTP with either L-glutamine or ammonia as the source of nitrogen. Regulates intracellular CTP levels through interactions with the four ribonucleotide triphosphates. This Helicobacter hepaticus (strain ATCC 51449 / 3B1) protein is CTP synthase.